The primary structure comprises 186 residues: MYVIVGLGNPDKKYEHTRHNIGFDVIDALADKYNISVTDKKHKALCGSGVIEGMKVLLVKPQTYMNLSGESVAEVMNFYKLDPDEEMIVIFDDISLEPGRIRIRKKGSAGGHNGIKSIIAMTGTQGFSRIKVGVGEKPQGWDLADHVLGRFSSEDRAKVEEAIGHAMDAAVLMMQGETDKAMNIYN.

Y14 contacts tRNA. The active-site Proton acceptor is H19. TRNA contacts are provided by Y64, N66, and N113.

The protein belongs to the PTH family. In terms of assembly, monomer.

The protein localises to the cytoplasm. It catalyses the reaction an N-acyl-L-alpha-aminoacyl-tRNA + H2O = an N-acyl-L-amino acid + a tRNA + H(+). In terms of biological role, hydrolyzes ribosome-free peptidyl-tRNAs (with 1 or more amino acids incorporated), which drop off the ribosome during protein synthesis, or as a result of ribosome stalling. Catalyzes the release of premature peptidyl moieties from peptidyl-tRNA molecules trapped in stalled 50S ribosomal subunits, and thus maintains levels of free tRNAs and 50S ribosomes. In Agathobacter rectalis (strain ATCC 33656 / DSM 3377 / JCM 17463 / KCTC 5835 / VPI 0990) (Eubacterium rectale), this protein is Peptidyl-tRNA hydrolase.